Reading from the N-terminus, the 138-residue chain is Small ribosomal subunit protein uS11c (138 aa).

Positions 1 to 21 (MTKAIQKIGSRRNGRIASRKN) are disordered. Residues 9–21 (GSRRNGRIASRKN) show a composition bias toward basic residues.

It belongs to the universal ribosomal protein uS11 family. In terms of assembly, part of the 30S ribosomal subunit.

The protein resides in the plastid. Its subcellular location is the chloroplast. This chain is Small ribosomal subunit protein uS11c, found in Ceratophyllum demersum (Rigid hornwort).